Consider the following 141-residue polypeptide: Small ribosomal subunit protein uS8c (141 aa).

Belongs to the universal ribosomal protein uS8 family. In terms of assembly, part of the 30S ribosomal subunit.

It is found in the plastid. The protein localises to the chloroplast. Its function is as follows. One of the primary rRNA binding proteins, it binds directly to 16S rRNA central domain where it helps coordinate assembly of the platform of the 30S subunit. This chain is Small ribosomal subunit protein uS8c (rps8), found in Pleurastrum terricola (Filamentous green alga).